We begin with the raw amino-acid sequence, 396 residues long: Cell adhesion molecule 3 (396 aa).

An N-terminal signal peptide occupies residues 1–22 (MGAPSALPLLLLLACSWAPGGA). Positions 23-124 (NLSQDDSQPW…VRTAKSLVTV (102 aa)) constitute an Ig-like V-type domain. Over 23-328 (NLSQDDSQPW…PVPSSSSTYH (306 aa)) the chain is Extracellular. Cystine bridges form between C48–C108, C150–C207, and C252–C297. 2 Ig-like C2-type domains span residues 128–226 (PQKP…QRIE) and 231–313 (PTAM…FTLN). N288 carries an N-linked (GlcNAc...) asparagine glycan. Residues 329 to 349 (AIIGGIVAFIVFLLLILLIFL) form a helical membrane-spanning segment. Residues 350 to 396 (GHYLIRHKGTYLTHEAKGSDDAPDADTAIINAEGGQSGGDDKKEYFI) lie on the Cytoplasmic side of the membrane. The disordered stretch occupies residues 365 to 396 (AKGSDDAPDADTAIINAEGGQSGGDDKKEYFI). Phosphoserine is present on S386.

Belongs to the nectin family. As to quaternary structure, homodimer. Can form trans-heterodimers with NECTIN3. Interacts with EPB41L1, DLG3, PALS2 and CASK. As to expression, mainly expressed in brain, in neuronal cell bodies of cerebellum, cortex, hippocampus, hypothalamus and spinal cord. In spinal cord predominantly expressed in motor neurons. Expressed in axons, presynaptic nerve terminals, glia cell processes.

The protein localises to the cell membrane. The protein resides in the cell junction. Involved in cell-cell adhesion. Has both calcium-independent homophilic cell-cell adhesion activity and calcium-independent heterophilic cell-cell adhesion activity with IGSF4, NECTIN1 and NECTIN3. Interaction with EPB41L1 may regulate structure or function of cell-cell junctions. The polypeptide is Cell adhesion molecule 3 (Cadm3) (Mus musculus (Mouse)).